The chain runs to 350 residues: Probable sugar phosphate/phosphate translocator At4g32390 (350 aa).

10 helical membrane-spanning segments follow: residues 15 to 35 (ILLS…VIVY), 49 to 69 (FPIT…VILI), 89 to 109 (VVPI…AYIY), 112 to 132 (VSFI…IGVL), 146 to 166 (MLSI…FDTW), 168 to 188 (VMLQ…IQIL), 205 to 225 (VAPC…LPIL), 235 to 255 (FVIF…VFLL), 263 to 283 (TMNV…WSVI), and 286 to 306 (TVTP…AYYN). Positions 38–155 (YILDKKMYNW…MLSISFGVAI (118 aa)) constitute an EamA domain. The interval 324 to 350 (QGDEEEAGKLLEERESEAAAKRNETED) is disordered.

The protein belongs to the TPT transporter family. TPT (TC 2.A.7.9) subfamily.

The protein localises to the membrane. The sequence is that of Probable sugar phosphate/phosphate translocator At4g32390 from Arabidopsis thaliana (Mouse-ear cress).